The sequence spans 188 residues: Pyridoxal 5'-phosphate synthase subunit PdxT (188 aa).

47–49 is an L-glutamine binding site; sequence GES. The active-site Nucleophile is cysteine 79. L-glutamine contacts are provided by residues arginine 105 and 134-135; that span reads IR. Residues histidine 170 and glutamate 172 each act as charge relay system in the active site.

The protein belongs to the glutaminase PdxT/SNO family. In terms of assembly, in the presence of PdxS, forms a dodecamer of heterodimers. Only shows activity in the heterodimer.

The enzyme catalyses aldehydo-D-ribose 5-phosphate + D-glyceraldehyde 3-phosphate + L-glutamine = pyridoxal 5'-phosphate + L-glutamate + phosphate + 3 H2O + H(+). It catalyses the reaction L-glutamine + H2O = L-glutamate + NH4(+). It participates in cofactor biosynthesis; pyridoxal 5'-phosphate biosynthesis. Catalyzes the hydrolysis of glutamine to glutamate and ammonia as part of the biosynthesis of pyridoxal 5'-phosphate. The resulting ammonia molecule is channeled to the active site of PdxS. The polypeptide is Pyridoxal 5'-phosphate synthase subunit PdxT (Listeria monocytogenes serotype 4b (strain CLIP80459)).